Here is a 440-residue protein sequence, read N- to C-terminus: Xylose isomerase (440 aa).

Active-site residues include histidine 101 and aspartate 104. 7 residues coordinate Mg(2+): glutamate 232, glutamate 268, histidine 271, aspartate 296, aspartate 307, aspartate 309, and aspartate 339.

It belongs to the xylose isomerase family. Homotetramer. Mg(2+) serves as cofactor.

The protein resides in the cytoplasm. It carries out the reaction alpha-D-xylose = alpha-D-xylulofuranose. The protein is Xylose isomerase of Escherichia coli O157:H7.